The chain runs to 286 residues: Bifunctional protein FolD (286 aa).

Residues 166 to 168 (GAS) and isoleucine 232 contribute to the NADP(+) site.

The protein belongs to the tetrahydrofolate dehydrogenase/cyclohydrolase family. Homodimer.

The catalysed reaction is (6R)-5,10-methylene-5,6,7,8-tetrahydrofolate + NADP(+) = (6R)-5,10-methenyltetrahydrofolate + NADPH. The enzyme catalyses (6R)-5,10-methenyltetrahydrofolate + H2O = (6R)-10-formyltetrahydrofolate + H(+). It functions in the pathway one-carbon metabolism; tetrahydrofolate interconversion. In terms of biological role, catalyzes the oxidation of 5,10-methylenetetrahydrofolate to 5,10-methenyltetrahydrofolate and then the hydrolysis of 5,10-methenyltetrahydrofolate to 10-formyltetrahydrofolate. The protein is Bifunctional protein FolD of Vibrio cholerae serotype O1 (strain ATCC 39541 / Classical Ogawa 395 / O395).